A 193-amino-acid polypeptide reads, in one-letter code: Thymidine kinase (193 aa).

Residues 9–16 and 87–90 contribute to the ATP site; these read SAMNAGKS and DEAQ. Glutamate 88 serves as the catalytic Proton acceptor. The Zn(2+) site is built by cysteine 145, cysteine 147, cysteine 182, and histidine 185.

Belongs to the thymidine kinase family. Homotetramer.

The protein localises to the cytoplasm. The catalysed reaction is thymidine + ATP = dTMP + ADP + H(+). This chain is Thymidine kinase, found in Idiomarina loihiensis (strain ATCC BAA-735 / DSM 15497 / L2-TR).